Here is a 47-residue protein sequence, read N- to C-terminus: uncharacterized protein (47 aa).

The interval 19 to 47 (EKVLKNQNPDRLSHMTDKNAQPKSKEKEE) is disordered.

This is an uncharacterized protein from Bacillus subtilis (strain 168).